A 675-amino-acid polypeptide reads, in one-letter code: PTS system glucose-specific EIICBA component (675 aa).

The 412-residue stretch at K3 to D414 folds into the PTS EIIC type-1 domain. 11 consecutive transmembrane segments (helical) span residues L16 to F36, A63 to L83, V89 to L109, V126 to A146, F170 to W190, A199 to I219, F273 to Y293, V303 to P323, L329 to I349, L355 to P375, and V383 to V403. A PTS EIIB type-1 domain is found at S425 to S506. The Phosphocysteine intermediate; for EIIB activity role is filled by C447. The 105-residue stretch at D547–N651 folds into the PTS EIIA type-1 domain. Residue H599 is the Tele-phosphohistidine intermediate; for EIIA activity of the active site.

The protein resides in the cell membrane. It catalyses the reaction N(pros)-phospho-L-histidyl-[protein] + D-glucose(out) = D-glucose 6-phosphate(in) + L-histidyl-[protein]. Inhibited by 2-deoxyglucose and methyl beta-D-glucoside, but not by methyl alpha-D-glucoside, p-nitrophenyl alpha-D-glucoside, o-nitrophenyl beta-D-glucoside and salicin. Functionally, the phosphoenolpyruvate-dependent sugar phosphotransferase system (sugar PTS), a major carbohydrate active transport system, catalyzes the phosphorylation of incoming sugar substrates concomitantly with their translocation across the cell membrane. This system is involved in glucose transport. Cannot transport galactose, fructose, mannose, cellobiose, sucrose, maltose, lactose, melibiose and trehalose, as well as N-acetylglucosamine. In Staphylococcus carnosus (strain TM300), this protein is PTS system glucose-specific EIICBA component (ptsG).